Consider the following 35-residue polypeptide: Tamulustoxin (35 aa).

Cystine bridges form between Cys2/Cys22, Cys7/Cys31, and Cys11/Cys33.

In terms of tissue distribution, expressed by the venom gland.

It is found in the secreted. Blocks Kv1.6/KCNA6 potassium channels. The protein is Tamulustoxin of Hottentotta tamulus (Eastern Indian scorpion).